A 408-amino-acid chain; its full sequence is UDP-N-acetylglucosamine--dolichyl-phosphate N-acetylglucosaminephosphotransferase (408 aa).

The Lumenal portion of the chain corresponds to 1 to 10; sequence MWAFPELPLP. A helical membrane pass occupies residues 11–38; the sequence is LLVNLFGSLLGFVATVTLIPAFRSHFIA. Over 39–58 the chain is Cytoplasmic; that stretch reads ARLCGQDLNKLSRQQIPESQ. UDP-N-acetyl-alpha-D-glucosamine-binding positions include 44 to 46 and Glu-56; that span reads QDL. The chain crosses the membrane as a helical span at residues 59–78; sequence GVICGAVFLIILFCFIPFPF. The Lumenal portion of the chain corresponds to 79-91; that stretch reads LNCFVEEQCKAFP. A helical membrane pass occupies residues 92 to 118; the sequence is HHEFVALIGALLAICCMIFLGFADDVL. Topologically, residues 119–121 are cytoplasmic; it reads NLR. A helical membrane pass occupies residues 122-143; sequence WRHKLLLPTAASLPLLMVYFTN. Lys-125 is a binding site for dolichyl phosphate. The Lumenal portion of the chain corresponds to 144–166; that stretch reads FGNTTIVVPKPFRWILGLHLDLG. The N-linked (GlcNAc...) asparagine glycan is linked to Asn-146. Residues 167–186 form a helical membrane-spanning segment; that stretch reads ILYYVYMGLLAVFCTNAINI. 178–186 lines the dolichyl phosphate pocket; it reads VFCTNAINI. Residue Asn-185 participates in Mg(2+) binding. Topologically, residues 187 to 192 are cytoplasmic; the sequence is LAGING. Asn-191 serves as a coordination point for UDP-N-acetyl-alpha-D-glucosamine. A helical transmembrane segment spans residues 193–213; that stretch reads LEAGQSLVISASIIVFNLVEL. At 214–218 the chain is on the lumenal side; sequence EGDYR. A helical membrane pass occupies residues 219-242; that stretch reads DDHVFSLYFMIPFFFTTLGLLYHN. The Cytoplasmic portion of the chain corresponds to 243 to 250; sequence WYPSQVFV. A helical membrane pass occupies residues 251–269; it reads GDTFCYFAGMTFAVVGILG. Asp-252 lines the Mg(2+) pocket. Over 270-271 the chain is Lumenal; that stretch reads HF. A helical membrane pass occupies residues 272 to 293; the sequence is SKTMLLFFIPQVFNFLYSLPQL. Residues 294–375 are Cytoplasmic-facing; it reads LHAIPCPRHR…LLLKIFGPIH (82 aa). Residue 301–303 coordinates UDP-N-acetyl-alpha-D-glucosamine; that stretch reads RHR. Residues 376 to 400 form a helical membrane-spanning segment; sequence ERNLTLLLLLLQILSSAVTFSIRYQ. The Lumenal portion of the chain corresponds to 401–408; it reads LVRLFYDV.

Belongs to the glycosyltransferase 4 family. Homodimer. Mg(2+) is required as a cofactor.

The protein localises to the endoplasmic reticulum membrane. It carries out the reaction a di-trans,poly-cis-dolichyl phosphate + UDP-N-acetyl-alpha-D-glucosamine = an N-acetyl-alpha-D-glucosaminyl-diphospho-di-trans,poly-cis-dolichol + UMP. It participates in protein modification; protein glycosylation. Its activity is regulated as follows. Inhibited by natural nucleoside antibiotic tunicamycin, which acts as a structural analog and competitor of UDP-GlcNAc. In terms of biological role, UDP-N-acetylglucosamine--dolichyl-phosphate N-acetylglucosaminephosphotransferase that operates in the biosynthetic pathway of dolichol-linked oligosaccharides, the glycan precursors employed in protein asparagine (N)-glycosylation. The assembly of dolichol-linked oligosaccharides begins on the cytosolic side of the endoplasmic reticulum membrane and finishes in its lumen. The sequential addition of sugars to dolichol pyrophosphate produces dolichol-linked oligosaccharides containing fourteen sugars, including two GlcNAcs, nine mannoses and three glucoses. Once assembled, the oligosaccharide is transferred from the lipid to nascent proteins by oligosaccharyltransferases. Catalyzes the initial step of dolichol-linked oligosaccharide biosynthesis, transfering GlcNAc-1-P from cytosolic UDP-GlcNAc onto the carrier lipid dolichyl phosphate (P-dolichol), yielding GlcNAc-P-P-dolichol embedded in the cytoplasmic leaflet of the endoplasmic reticulum membrane. The protein is UDP-N-acetylglucosamine--dolichyl-phosphate N-acetylglucosaminephosphotransferase (DPAGT1) of Cricetulus griseus (Chinese hamster).